We begin with the raw amino-acid sequence, 857 residues long: Trehalose transporter 1 (857 aa).

Disordered regions lie at residues 1-28 (MSGR…KLKE) and 62-202 (DPFL…QKAT). Residues 1-392 (MSGRDNRGAG…VYRPTTNPIY (392 aa)) are Cytoplasmic-facing. Position 9 is a phosphothreonine (Ala-9). Gly-12 is modified (phosphoserine). The span at 69–81 (VSPQRHPQNTVRT) shows a compositional bias: polar residues. The span at 134–143 (EIREHRDRQQ) shows a compositional bias: basic and acidic residues. Polar residues predominate over residues 171-181 (GNSNTNSNKAA). 3 positions are modified to phosphoserine: Ser-248, Ser-249, and Ser-250. Disordered stretches follow at residues 249-269 (SSEE…HQSL) and 280-299 (VLQG…EHKR). Phosphoserine is present on residues Ser-320 and Ser-322. A disordered region spans residues 327–346 (LTSRQHFQQQRSISTDSRKS). Polar residues predominate over residues 330–341 (RQHFQQQRSIST). A helical membrane pass occupies residues 393 to 413 (IWTQVLAALSVSLGSLVVGFV). Residues 414–440 (SAYTSPALVSMTDRNITSFEVTQDAGS) lie on the Extracellular side of the membrane. Asn-428 carries an N-linked (GlcNAc...) asparagine glycan. A helical membrane pass occupies residues 441–461 (WVGGIMPLAGLAGGIAGGPLI). Over 462–473 (EYLGRRNTILAT) the chain is Cytoplasmic. The chain crosses the membrane as a helical span at residues 474–494 (AVPFIVSSLLIACAVNVAMVL). Residues 495–497 (CGR) are Extracellular-facing. Residues 498–518 (FLAGFCVGIASLSLPVYLGET) form a helical membrane-spanning segment. At 519–528 (VQPEVRGTLG) the chain is on the cytoplasmic side. A helical membrane pass occupies residues 529–549 (LLPTAFGNIGILLCFVAGSFM). Asn-550 carries an N-linked (GlcNAc...) asparagine glycan. Over 550 to 552 (NWS) the chain is Extracellular. The chain crosses the membrane as a helical span at residues 553–573 (MLAFLGAALPVPFLILMFLIP). The Cytoplasmic segment spans residues 574–636 (ETPRWFVGRG…ELLKLNNLKP (63 aa)). A helical membrane pass occupies residues 637–657 (LSISLGLMFFQQFSGINAVIF). Residues 658 to 673 (YTVQIFKDAGSTIDGN) are Extracellular-facing. The helical transmembrane segment at 674–694 (LCTIIVGIVNFLATFIGIVLI) threads the bilayer. Topologically, residues 695 to 700 (DRAGRK) are cytoplasmic. The helical transmembrane segment at 701–721 (ILLYVSDIAMVLTLFVLGGFF) threads the bilayer. Residues 722–740 (YCKTYGPDVSHLGWLPLTC) are Extracellular-facing. A helical membrane pass occupies residues 741–761 (FVIYILGFSLGFGPIPWLMMG). Residues 762–767 (EILPAK) lie on the Cytoplasmic side of the membrane. A helical membrane pass occupies residues 768–788 (IRGSAASVATAFNWFCTFVVT). Over 789–801 (KTFQDLTVAMGAH) the chain is Extracellular. A helical transmembrane segment spans residues 802–822 (GAFWLFGAICFVGLFFVIIYV). At 823–857 (PETQGKTLEDIERKMMGRVRRMSSVANIKPLSFNM) the chain is on the cytoplasmic side. Residues Ser-845 and Ser-846 each carry the phosphoserine modification.

Belongs to the major facilitator superfamily. Sugar transporter (TC 2.A.1.1) family. Trehalose transporter subfamily. As to expression, expressed in perineurial glia of the outer layer of the nervous system that forms the blood brain barrier (at protein level). Expressed in the fat body (at protein level). In terms of tissue distribution, may be specifically expressed in perineurial glia (at protein level). May be specifically expressed in the fat body (at protein level).

Its subcellular location is the cell membrane. The protein localises to the vesicle. The catalysed reaction is alpha,alpha-trehalose(in) = alpha,alpha-trehalose(out). It catalyses the reaction D-glucose(out) = D-glucose(in). Functionally, low-capacity facilitative transporter for trehalose. Can also transport glucose. Does not transport maltose, sucrose, lactose or fructose. Mediates the bidirectional transfer of trehalose. Responsible for the transport of trehalose synthesized in the fat body and the incorporation of trehalose into other tissues that require a carbon source, thereby regulating trehalose levels in the hemolymph. Required in glial cells of the blood brain barrier to fuel glycolysis but not required in neurons. Neurons rely on the citric acid cycle for their energy needs and utilise alanine and lactate, by-products of glial cell glycolysis released into the hemolymph, as fuel. Increased expression in glial cells of the blood brain barrier during starvation and increased cell surface localization enhances carbohydrate uptake to protect the central nervous system from restricted nutrient availability. The protein is Trehalose transporter 1 of Drosophila melanogaster (Fruit fly).